Consider the following 459-residue polypeptide: MGPLCAVCESPTAFTLHFGGRCCKACAAFFRRTIALDLKYECAADDPCEIHFKFPGMRLVCRECRLRKCYSAGMRSELVRSKRENFACTRRKDSRNNSDAAPNSNSPSTRQSSSPEEMDDWSFQMFEEKPKIEDLPLTPSISHPPLPTQLMPEESSRTSSFDGGYCSSYPSSSAATHPSPPGMLYSIENNSILQYYHSMETGLCSKRRIMYTNTGMDFILDTHANLQCPFTVNDLRPHDYRNFRGMLRHDFVMLFDYATRFPEFNSFTSHEKNMFYRQIVAVDFILSSAYYTAKLGQAHRQMVLTNGEYLNMDPLPMSGNEIDARRYFDCDEDFSKYRALMPMHIAIWEESIVPFSKLNVTFEEFCLLKALTVWQATYFKLTENGREKCRRQRNIIIGFLSKMCHSPGGGGEHRVGELLMSMNYLRESAQKLTTSYVMLTVFNVLNCDSMLHEMLNFQY.

Positions 2–81 (GPLCAVCESP…AGMRSELVRS (80 aa)) form a DNA-binding region, nuclear receptor. 2 consecutive NR C4-type zinc fingers follow at residues 5–26 (CAVC…CKAC) and 42–69 (CAAD…LRKC). Disordered regions lie at residues 90 to 119 (RRKD…EEMD) and 134 to 162 (DLPL…SSFD). Low complexity predominate over residues 97-115 (NSDAAPNSNSPSTRQSSSP). One can recognise an NR LBD domain in the interval 188 to 458 (ENNSILQYYH…SMLHEMLNFQ (271 aa)).

Belongs to the nuclear hormone receptor family.

The protein resides in the nucleus. In terms of biological role, orphan nuclear receptor. The sequence is that of Nuclear hormone receptor family member nhr-11 (nhr-11) from Caenorhabditis elegans.